An 870-amino-acid chain; its full sequence is Dynamin-2 (870 aa).

The Dynamin-type G domain maps to 28 to 294 (HLDLPQIAVV…LTNHIRESLP (267 aa)). The segment at 38–45 (GGQSAGKS) is G1 motif. GDP-binding residues include serine 41, glycine 43, lysine 44, serine 45, serine 46, arginine 59, and glycine 60. The segment at 64–66 (VTR) is G2 motif. The interval 136–139 (DLPG) is G3 motif. Positions 205–208 (TKLD) are G4 motif. GDP-binding residues include lysine 206, aspartate 208, and aspartate 211. Residue tyrosine 231 is modified to Phosphotyrosine; by SRC. A G5 motif region spans residues 235–238 (VNRS). GDP-binding residues include asparagine 236, arginine 237, and glutamine 239. N6-acetyllysine is present on lysine 299. A PH domain is found at 519–625 (LVIRRGWLTI…WKASFLRAGV (107 aa)). Tyrosine 597 carries the phosphotyrosine; by SRC modification. At lysine 598 the chain carries N6-acetyllysine. In terms of domain architecture, GED spans 653 to 744 (VETIRNLVDS…IIGDISTSTV (92 aa)). A disordered region spans residues 741–870 (TSTVSTPVPP…IRPAEPSLLD (130 aa)). Threonine 755 bears the Phosphothreonine mark. Polar residues predominate over residues 756 to 767 (WLQSASSHSPTP). Serine 764 is modified (phosphoserine; by CDK1). Over residues 796-806 (VPVGAAASFSA) the composition is skewed to low complexity. Positions 826–855 (PAPPQIPSRPVRIPPGIPPGVPSRRPPAAP) are enriched in pro residues. Residue serine 848 is modified to Phosphoserine; by GSK3-alpha.

The protein belongs to the TRAFAC class dynamin-like GTPase superfamily. Dynamin/Fzo/YdjA family. As to quaternary structure, oligomerizes into a helical polymer that self-assembles around the vesicle membrane, when associated to the menbrane through lipid binding. Interacts with SHANK1 and SHANK2. Interacts with SNX9. Interacts (via C-terminal proline-rich domain (PRD)) with SNX18 (via SH3 domain); this interaction regulates ATG9A and ATG16L1 trafficking from recycling endosomes to sites of autophagosome formation. Interacts with SNX33 (via SH3 domain). Interacts with MYO1E (via SH3 domain). Interacts with PSTPIP1 (via SH3 domain). Interacts with CTNND2. Interacts (via C-terminal proline-rich domain (PRD)) with BIN1 (via SH3 domain); this interaction allows the recruitment of DNM2 to the membrane tubules and inhibits self-assembly-stimulated GTPase activity on the membrane. Interacts with GABARAP, GABARAPL1 and GABARAPL2. Interacts with MAP1LC3B (the lipidate and non-lipidated LC3 form); this interaction mediates recycling endosome scission leading to autophagosome release. Interacts with ITSN1. Interacts (via C-terminal proline-rich domain (PRD)) with SH3BP4 (via SH3 domain); this interaction controls the GTPase activity and is prevented by EGFR-induced tyrosine phosphorylation of either DNM2 or SH3BP4. May interact with PIK3C3. May be a component of a complex composed of RAB5A (in GDP-bound form), DYN2 and PIK3C3. Interacts with SDC4; this interaction is markedly enhanced at focal ahesion site upon induction of focal adhesions and stress-fiber formation. Interacts with ACTN1. Interacts with CTTN; this interaction stimulates the intrinsic GTPase activity of DNM2 and stabilizes the association of DNM2 and actin filaments; in addition this interaction is stimulated by ligand binding to the receptor, leading to the recruitment of the DNM2-CTTN complex to the sequestered receptor-ligand complex to its internalization. Interacts with NOSTRIN (via SH3 domain); this interaction allows the recruitment of NOS3 to dynamin-positive structures. Interacts with TUBG1; this interaction may participate in centrosome cohesion. Phosphorylation at Ser-848 by GSK3-alpha relieves the inhibition of BIN1 and promotes endocytosis. Phosphorylation at Ser-764 by CDK1 is greatly increased upon mitotic entry. It regulates cytokinesis downstream of calcineurin, and does not affect clathrin-mediated endocytosis. Dephosphorylated by calcineurin/PP2 during cytokinesis in a Ca(2+)- and calmodulin-dependent manner. Phosphorylated on tyrosine residues by EGFR and after activation of SRC. Widely expressed. Expressed in skeletal muscle and the peripheral nerve.

Its subcellular location is the cytoplasm. The protein resides in the cytoskeleton. It localises to the cytoplasmic vesicle. The protein localises to the clathrin-coated vesicle. It is found in the cell projection. Its subcellular location is the uropodium. The protein resides in the endosome. It localises to the microtubule organizing center. The protein localises to the centrosome. It is found in the centriole. Its subcellular location is the recycling endosome. The protein resides in the phagocytic cup. It localises to the phagosome membrane. The protein localises to the podosome. It is found in the cell junction. Its subcellular location is the postsynaptic density. The protein resides in the synapse. It localises to the synaptosome. The protein localises to the midbody. It is found in the membrane. Its subcellular location is the clathrin-coated pit. It carries out the reaction GTP + H2O = GDP + phosphate + H(+). Catalyzes the hydrolysis of GTP and utilizes this energy to mediate vesicle scission at plasma membrane during endocytosis and filament remodeling at many actin structures during organization of the actin cytoskeleton. Plays an important role in vesicular trafficking processes, namely clathrin-mediated endocytosis (CME), exocytic and clathrin-coated vesicle from the trans-Golgi network, and PDGF stimulated macropinocytosis. During vesicular trafficking process, associates to the membrane, through lipid binding, and self-assembles into ring-like structure through oligomerization to form a helical polymer around the vesicle membrane and leading to vesicle scission. Plays a role in organization of the actin cytoskeleton by mediating arrangement of stress fibers and actin bundles in podocytes. During organization of the actin cytoskeleton, self-assembles into ring-like structure that directly bundles actin filaments to form typical membrane tubules decorated with dynamin spiral polymers. Self-assembly increases GTPase activity and the GTP hydrolysis causes the rapid depolymerization of dynamin spiral polymers, and results in dispersion of actin bundles. Remodels, through its interaction with CTTN, bundled actin filaments in a GTPase-dependent manner and plays a role in orchestrating the global actomyosin cytoskeleton. The interaction with CTTN stabilizes the interaction of DNM2 and actin filaments and stimulates the intrinsic GTPase activity that results in actin filament-barbed ends and increases the sensitivity of filaments in bundles to the actin depolymerizing factor, CFL1. Plays a role in the autophagy process, by participating in the formation of ATG9A vesicles destined for the autophagosomes through its interaction with SNX18, by mediating recycling endosome scission leading to autophagosome release through MAP1LC3B interaction. Also regulates maturation of apoptotic cell corpse-containing phagosomes by recruiting PIK3C3 to the phagosome membrane. Also plays a role in cytokinesis. May participate in centrosome cohesion through its interaction with TUBG1. Plays a role in the regulation of neuron morphology, axon growth and formation of neuronal growth cones. Involved in membrane tubulation. This is Dynamin-2 from Homo sapiens (Human).